A 283-amino-acid polypeptide reads, in one-letter code: ATP synthase gamma chain (283 aa).

This sequence belongs to the ATPase gamma chain family. As to quaternary structure, F-type ATPases have 2 components, CF(1) - the catalytic core - and CF(0) - the membrane proton channel. CF(1) has five subunits: alpha(3), beta(3), gamma(1), delta(1), epsilon(1). CF(0) has three main subunits: a, b and c.

The protein localises to the cell membrane. In terms of biological role, produces ATP from ADP in the presence of a proton gradient across the membrane. The gamma chain is believed to be important in regulating ATPase activity and the flow of protons through the CF(0) complex. This is ATP synthase gamma chain from Clostridium beijerinckii (strain ATCC 51743 / NCIMB 8052) (Clostridium acetobutylicum).